The chain runs to 182 residues: Ribosome maturation factor RimM (182 aa).

A PRC barrel domain is found at 103-182; the sequence is EDEFYWRELF…RIEVDWDPAF (80 aa).

This sequence belongs to the RimM family. Binds ribosomal protein uS19.

Its subcellular location is the cytoplasm. Its function is as follows. An accessory protein needed during the final step in the assembly of 30S ribosomal subunit, possibly for assembly of the head region. Essential for efficient processing of 16S rRNA. May be needed both before and after RbfA during the maturation of 16S rRNA. It has affinity for free ribosomal 30S subunits but not for 70S ribosomes. This is Ribosome maturation factor RimM from Vibrio cholerae serotype O1 (strain ATCC 39315 / El Tor Inaba N16961).